The primary structure comprises 245 residues: 3-deoxy-manno-octulosonate cytidylyltransferase (245 aa).

This sequence belongs to the KdsB family.

The protein resides in the cytoplasm. It catalyses the reaction 3-deoxy-alpha-D-manno-oct-2-ulosonate + CTP = CMP-3-deoxy-beta-D-manno-octulosonate + diphosphate. It participates in nucleotide-sugar biosynthesis; CMP-3-deoxy-D-manno-octulosonate biosynthesis; CMP-3-deoxy-D-manno-octulosonate from 3-deoxy-D-manno-octulosonate and CTP: step 1/1. Its pathway is bacterial outer membrane biogenesis; lipopolysaccharide biosynthesis. Functionally, activates KDO (a required 8-carbon sugar) for incorporation into bacterial lipopolysaccharide in Gram-negative bacteria. This is 3-deoxy-manno-octulosonate cytidylyltransferase from Rhodopseudomonas palustris (strain BisB5).